A 360-amino-acid chain; its full sequence is DNA replication and repair protein RecF (360 aa).

Residue 33–40 participates in ATP binding; it reads GENGSGKT.

Belongs to the RecF family.

It localises to the cytoplasm. The RecF protein is involved in DNA metabolism; it is required for DNA replication and normal SOS inducibility. RecF binds preferentially to single-stranded, linear DNA. It also seems to bind ATP. The sequence is that of DNA replication and repair protein RecF from Rickettsia akari (strain Hartford).